Consider the following 726-residue polypeptide: MPDSRAAPQESLLDASLGTTQENVGTSSLTDGQTLSKEPLSHALKLSTPEKVKDAQLNPPEEALWTTRADGRVRLRIDPICSQTPRTVHQMFSTTLDKYGDLSAMGFKRQGTWEHISYTQYYLLARKAAKGFLKLGLERAHSVAILAFNSPEWFFSAVGAVFGGGIITGIYTTSSPEACQYIAYDCRANIIVVDTQKQLEKILKIWKHLPHLKAVVIYREAPPMRMPSVYTMEELMELGNEVPEEALDVIINAQKPNQCCALVYTSGTTGNPKGVMLSQDNITWTARYGSQAGDIQPAEIQQEVVVSYLPLSHIAAQIYDLWTGIQWGAQVCFAEPDALKGSLVNTLREVEPTSHMGVPRVWEKIMEQIQEVAAQSGFIWRKMLLWAMSVTLEQNLTCPSSDLKPFTTRLADYLVLAKVRQALGFAKCQKNFYGAAPMTAETQHFFLGLNIRLYAGYGLSETSGPHFMSSPYNYRLYSSGKVVPGCQVKLVNEDAEGIGEICLWGRTIFMGYLNMEDKTCEAIDAEGWLHTGDTGRLDADGFLYITGRLKELIITAGGENVPPVPIEEAVKTELPIIRNAMLIGDQRKFLSMLLTLKCTLDPDTFEPTDNLTEQAVEFCQRVGSKATTVSEVVGKKDEAVYQAIEEGIQRVNMNAAARPYHIQKWAILEKDFSISGGELGPTMKLKRLAVLEKYKDVIDSFYQEQKSKQGSSLPGFSLRWQTGASS.

The segment at 1-39 is disordered; that stretch reads MPDSRAAPQESLLDASLGTTQENVGTSSLTDGQTLSKEP. Over residues 17–36 the composition is skewed to polar residues; sequence LGTTQENVGTSSLTDGQTLS. Phosphoserine is present on S36. Phosphotyrosine is present on Y641. A disordered region spans residues 707–726; the sequence is SKQGSSLPGFSLRWQTGASS.

The protein belongs to the ATP-dependent AMP-binding enzyme family. Bubblegum subfamily.

The protein localises to the cytoplasm. It localises to the cytoplasmic vesicle. Its subcellular location is the microsome. It is found in the endoplasmic reticulum. The protein resides in the cell membrane. The catalysed reaction is a long-chain fatty acid + ATP + CoA = a long-chain fatty acyl-CoA + AMP + diphosphate. It carries out the reaction (E)-hexadec-2-enoate + ATP + CoA = (2E)-hexadecenoyl-CoA + AMP + diphosphate. It catalyses the reaction hexadecanoate + ATP + CoA = hexadecanoyl-CoA + AMP + diphosphate. Catalyzes the conversion of fatty acids such as long-chain and very long-chain fatty acids to their active form acyl-CoAs for both synthesis of cellular lipids, and degradation via beta-oxidation. Can activate diverse saturated, monosaturated and polyunsaturated fatty acids. The polypeptide is Long-chain-fatty-acid--CoA ligase ACSBG1 (Bos taurus (Bovine)).